A 970-amino-acid polypeptide reads, in one-letter code: Sodium/calcium exchanger 1 (970 aa).

The N-terminal stretch at 1–32 (MLQFSLSPTLSMGFHVIAMVALLFSHVDHISA) is a signal peptide. Residues 33-71 (ETEMEGEGNETGECTGSYYCKKGVILPIWEPQDPSFGDK) lie on the Extracellular side of the membrane. A glycan (N-linked (GlcNAc...) asparagine) is linked at Asn-41. A helical transmembrane segment spans residues 72–92 (IARATVYFVAMVYMFLGVSII). Residues 93–133 (ADRFMSSIEVITSQEKEITIKKPNGETTKTTVRIWNETVSN) are Cytoplasmic-facing. A helical transmembrane segment spans residues 134 to 154 (LTLMALGSSAPEILLSVIEVC). The stretch at 138–178 (ALGSSAPEILLSVIEVCGHNFTAGDLGPSTIVGSAAFNMFI) is one Alpha-1 repeat. At 155-167 (GHNFTAGDLGPST) the chain is on the extracellular side. Asn-157 carries an N-linked (GlcNAc...) asparagine glycan. A helical transmembrane segment spans residues 168-188 (IVGSAAFNMFIIIALCVYVVP). The Cytoplasmic portion of the chain corresponds to 189 to 201 (DGETRKIKHLRVF). Residues 202-222 (FVTAAWSIFAYTWLYIILSVS) form a helical membrane-spanning segment. The Extracellular segment spans residues 223 to 228 (SPGVVE). The chain crosses the membrane as a helical span at residues 229–249 (VWEGLLTFFFFPICVVFAWVA). Over 250–797 (DRRLLFYKYV…FVPPTEYWNG (548 aa)) the chain is Cytoplasmic. The tract at residues 251-270 (RRLLFYKYVYKRYRAGKQRG) is putative calmodulin-binding region. 2 positions are modified to phosphoserine: Ser-282 and Ser-389. 2 Calx-beta domains span residues 393 to 493 (VNTE…VHLS) and 524 to 624 (ATVT…LEIG). Ca(2+)-binding residues include Glu-417, Asp-453, Asp-478, Asp-479, Ile-481, Glu-483, Glu-486, Asp-530, Asp-531, Asp-532, Glu-548, Asp-584, Asp-610, Glu-611, Glu-612, and Glu-715. Residues 798–818 (WACFIVSILMIGLLTAFIGDL) form a helical membrane-spanning segment. The Extracellular portion of the chain corresponds to 819 to 821 (ASH). The helical transmembrane segment at 822 to 842 (FACTIALKDSVTAVVFVALGT) threads the bilayer. Residues 839 to 875 (ALGTSVPDTFASKVAATQDQYADASIGNVTGSNAVNV) form an Alpha-2 repeat. The Cytoplasmic portion of the chain corresponds to 843-871 (SVPDTFASKVAATQDQYADASIGNVTGSN). A helical transmembrane segment spans residues 872–892 (AVNVFLGIGVAWSIAAIYHAA). Over 893–903 (NGEQFKVSPGT) the chain is Extracellular. A helical membrane pass occupies residues 904–924 (LAFSVTLFTIFAFINVGVLLY). The Cytoplasmic segment spans residues 925 to 941 (RRRPEIGGELGGPRTAK). A helical transmembrane segment spans residues 942-962 (LLTSCLFVLLWLLYIFFSSLE). Topologically, residues 963–970 (AYCHIKGF) are extracellular.

Belongs to the Ca(2+):cation antiporter (CaCA) (TC 2.A.19) family. SLC8 subfamily.

The protein localises to the cell membrane. It catalyses the reaction Ca(2+)(in) + 3 Na(+)(out) = Ca(2+)(out) + 3 Na(+)(in). With respect to regulation, activated by micromolar levels of Ca(2+). Functionally, mediates the exchange of one Ca(2+) ion against three to four Na(+) ions across the cell membrane, and thereby contributes to the regulation of cytoplasmic Ca(2+) levels and Ca(2+)-dependent cellular processes. Contributes to Ca(2+) transport during excitation-contraction coupling in muscle. In a first phase, voltage-gated channels mediate the rapid increase of cytoplasmic Ca(2+) levels due to release of Ca(2+) stores from the endoplasmic reticulum. SLC8A1 mediates the export of Ca(2+) from the cell during the next phase, so that cytoplasmic Ca(2+) levels rapidly return to baseline. Required for normal embryonic heart development and the onset of heart contractions. The sequence is that of Sodium/calcium exchanger 1 (SLC8A1) from Bos taurus (Bovine).